Reading from the N-terminus, the 140-residue chain is Histone H2B (140 aa).

Residues 1 to 10 show a composition bias toward basic and acidic residues; sequence MPPKAAEKKP. The disordered stretch occupies residues 1-48; sequence MPPKAAEKKPTTGGKAPAGKAPAEKKEAGKKTAAAASGDKKKRGKTRK. An N6-acetyllysine; alternate mark is found at lysine 8 and lysine 9. Glycyl lysine isopeptide (Lys-Gly) (interchain with G-Cter in SUMO); alternate cross-links involve residues lysine 8 and lysine 9. The span at 11–21 shows a compositional bias: low complexity; sequence TTGGKAPAGKA. Lysine 15 bears the N6-acetyllysine mark. The residue at position 25 (lysine 25) is an N6-acetyllysine; alternate. A Glycyl lysine isopeptide (Lys-Gly) (interchain with G-Cter in SUMO); alternate cross-link involves residue lysine 25. Lysine 26 participates in a covalent cross-link: Glycyl lysine isopeptide (Lys-Gly) (interchain with G-Cter in SUMO). A Glycyl lysine isopeptide (Lys-Gly) (interchain with G-Cter in ubiquitin) cross-link involves residue lysine 134.

The protein belongs to the histone H2B family. As to quaternary structure, the nucleosome is a histone octamer containing two molecules each of H2A, H2B, H3 and H4 assembled in one H3-H4 heterotetramer and two H2A-H2B heterodimers. The octamer wraps approximately 147 bp of DNA. Monoubiquitinated by the ubc2-bre1 complex to form H2BK123ub1. H2BK123ub1 gives a specific tag for epigenetic transcriptional activation and is also prerequisite for H3K4me and H3K79me formation. H2BK123ub1 also modulates the formation of double-strand breaks during meiosis and is a prerequisite for DNA-damage checkpoint activation. Post-translationally, acetylated by gcn5 to form H2BK11ac and H2BK16ac. H2BK16ac can also be formed by esa1. Acetylation of N-terminal lysines and particularly formation of H2BK11acK16ac has a positive effect on transcription. In terms of processing, sumoylation to form H2BK6su or H2BK7su, and probably also H2BK16su or H2BK17su, occurs preferentially near the telomeres and represses gene transcription.

It is found in the nucleus. The protein localises to the chromosome. Its function is as follows. Core component of nucleosome. Nucleosomes wrap and compact DNA into chromatin, limiting DNA accessibility to the cellular machineries which require DNA as a template. Histones thereby play a central role in transcription regulation, DNA repair, DNA replication and chromosomal stability. DNA accessibility is regulated via a complex set of post-translational modifications of histones, also called histone code, and nucleosome remodeling. The chain is Histone H2B (htb1) from Aspergillus terreus (strain NIH 2624 / FGSC A1156).